Reading from the N-terminus, the 105-residue chain is Large ribosomal subunit protein eL36 (105 aa).

Residues 1 to 20 (MAKEAPAKTGLAVGLNKGHK) are disordered.

This sequence belongs to the eukaryotic ribosomal protein eL36 family.

The polypeptide is Large ribosomal subunit protein eL36 (rpl36) (Trichoderma hamatum).